Here is a 303-residue protein sequence, read N- to C-terminus: tRNA dimethylallyltransferase (303 aa).

11 to 18 contacts ATP; the sequence is GPTGVGKS. Residue 13-18 coordinates substrate; the sequence is TGVGKS. 2 interaction with substrate tRNA regions span residues 36-39 and 159-163; these read DSRQ and QRVLR.

This sequence belongs to the IPP transferase family. In terms of assembly, monomer. The cofactor is Mg(2+).

It catalyses the reaction adenosine(37) in tRNA + dimethylallyl diphosphate = N(6)-dimethylallyladenosine(37) in tRNA + diphosphate. Functionally, catalyzes the transfer of a dimethylallyl group onto the adenine at position 37 in tRNAs that read codons beginning with uridine, leading to the formation of N6-(dimethylallyl)adenosine (i(6)A). The chain is tRNA dimethylallyltransferase from Lawsonia intracellularis (strain PHE/MN1-00).